A 360-amino-acid polypeptide reads, in one-letter code: Josephin-like protein (360 aa).

The region spanning 5–192 (ESKIYHERQR…NQLPLASNYR (188 aa)) is the Josephin domain. Catalysis depends on C18, which acts as the Nucleophile. Residue H129 is the Proton acceptor of the active site.

It catalyses the reaction Thiol-dependent hydrolysis of ester, thioester, amide, peptide and isopeptide bonds formed by the C-terminal Gly of ubiquitin (a 76-residue protein attached to proteins as an intracellular targeting signal).. Functionally, may act as a deubiquitinating enzyme. This is Josephin-like protein from Arabidopsis thaliana (Mouse-ear cress).